The chain runs to 659 residues: Serine/threonine-protein kinase StkP (659 aa).

Residues 1-342 (MIQIGKIFAG…PQAPKKHRFK (342 aa)) are Cytoplasmic-facing. The Protein kinase domain occupies 12-273 (YRIVKQIGRG…EMYVDLSSSL (262 aa)). ATP is bound by residues 18-26 (IGRGGMADV) and lysine 42. The active-site Proton acceptor is aspartate 136. A helical membrane pass occupies residues 343-363 (MRYLILLASLVLVAASLIWIL). The Periplasmic segment spans residues 364–659 (SRSPATIAIP…YKPKTTSATP (296 aa)). PASTA domains lie at 366-433 (SPAT…VVSS), 434-505 (GKQS…TVAK), 506-577 (KATT…TVAK), and 578-651 (KVTS…SIYK). Positions 541-561 (EEESSESEPGTIMKQSPGAGT) are disordered.

Belongs to the protein kinase superfamily. Ser/Thr protein kinase family. Homodimer. StkP forms dimers through its transmembrane and extracellular domains. Dimer formation likely promotes autophosphorylation activity and might be necessary for targeting StkP substrate. Interacts with PhpP via its kinase domain. In terms of processing, autophosphorylation occurs predominantly on threonine residue(s) and weakly on serine residue(s). Dephosphorylated by PhpP.

Its subcellular location is the cell membrane. It carries out the reaction L-seryl-[protein] + ATP = O-phospho-L-seryl-[protein] + ADP + H(+). The enzyme catalyses L-threonyl-[protein] + ATP = O-phospho-L-threonyl-[protein] + ADP + H(+). Its activity is regulated as follows. StkP is activated continuously during growth and its activity is inhibited upon growth arrest. Inhibited by staurosporine, a known protein kinase inhibitor. Its function is as follows. Protein kinase involved in signal transduction pathways that regulate various cellular processes. Likely senses intracellular peptidoglycan subunits present in the cell division septa of actively growing cells; thus, intracellular unlinked peptidoglycan may serve as the signal molecules that trigger StkP phosphorylation activity on a set of substrates. Plays a crucial role in the regulation of cell shape and cell division of S.pneumoniae through control of at least DivIVA activity. Is involved in competence triggering, via the transduction of signals culminating directly or indirectly in ComD activation. Is important for the resistance of S.pneumoniae to various environmental stress conditions. Appears to be a global regulator that positively controls the transcription of a set of genes encoding functions involved in cell wall metabolism, pyrimidine biosynthesis, DNA repair, iron uptake, and oxidative stress response, and that seems to down-regulate genes employed in competence. Since StkP is unlikely to directly regulate transcription, the input signal must be transmitted through an effector molecule. Identified target substrates that are specifically phosphorylated by StkP in vivo, mainly on threonine residues, are DivIVA, GlmM, PpaC, MapZ, KhpB (also called EloR/Jag) and StkP itself. Autophosphorylated StkP is a substrate for the cotranscribed protein phosphatase PhpP; PhpP and StkP appear to constitute a functional signaling couple in vivo. The protein is Serine/threonine-protein kinase StkP (stkP) of Streptococcus pneumoniae.